The following is a 295-amino-acid chain: Phosphoribosylaminoimidazole-succinocarboxamide synthase (295 aa).

Belongs to the SAICAR synthetase family.

It carries out the reaction 5-amino-1-(5-phospho-D-ribosyl)imidazole-4-carboxylate + L-aspartate + ATP = (2S)-2-[5-amino-1-(5-phospho-beta-D-ribosyl)imidazole-4-carboxamido]succinate + ADP + phosphate + 2 H(+). The protein operates within purine metabolism; IMP biosynthesis via de novo pathway; 5-amino-1-(5-phospho-D-ribosyl)imidazole-4-carboxamide from 5-amino-1-(5-phospho-D-ribosyl)imidazole-4-carboxylate: step 1/2. This chain is Phosphoribosylaminoimidazole-succinocarboxamide synthase, found in Desulforapulum autotrophicum (strain ATCC 43914 / DSM 3382 / VKM B-1955 / HRM2) (Desulfobacterium autotrophicum).